Consider the following 125-residue polypeptide: MDIIKKNKKIIILVCLMFLAIMVYIYKSNGPDKTNDNILEVKITIKDHKFVPNIVEVPKSTKIRLIIHNADDTIEEFESHDLHREKIVMPHESINIILAPLKPGKYEIFGDFHQDTAQGFIIVND.

A helical transmembrane segment spans residues 10-26 (IIILVCLMFLAIMVYIY).

It localises to the membrane. This is an uncharacterized protein from Rickettsia prowazekii (strain Madrid E).